The following is a 124-amino-acid chain: Small ribosomal subunit protein uS12 (124 aa).

A 3-methylthioaspartic acid modification is found at aspartate 89.

It belongs to the universal ribosomal protein uS12 family. Part of the 30S ribosomal subunit. Contacts proteins S8 and S17. May interact with IF1 in the 30S initiation complex.

With S4 and S5 plays an important role in translational accuracy. In terms of biological role, interacts with and stabilizes bases of the 16S rRNA that are involved in tRNA selection in the A site and with the mRNA backbone. Located at the interface of the 30S and 50S subunits, it traverses the body of the 30S subunit contacting proteins on the other side and probably holding the rRNA structure together. The combined cluster of proteins S8, S12 and S17 appears to hold together the shoulder and platform of the 30S subunit. In Shewanella denitrificans (strain OS217 / ATCC BAA-1090 / DSM 15013), this protein is Small ribosomal subunit protein uS12.